Consider the following 493-residue polypeptide: Angiopoietin-related protein 2 (493 aa).

A signal peptide spans 1 to 19; sequence MRPLCMTYWWLGLLATVGA. 2 coiled-coil regions span residues 77 to 115 and 152 to 202; these read EVHL…VDGG and ALEL…QLEE. N-linked (GlcNAc...) asparagine glycans are attached at residues N164 and N192. The Fibrinogen C-terminal domain occupies 269–489; that stretch reads DKPSGPWRDC…KVVMMIRPNP (221 aa). 2 disulfide bridges follow: C278-C307 and C430-C443.

As to expression, widely expressed in heart, tongue, lung and skeletal muscle. Also found in lower levels in kidney, epididymis and testis.

The protein localises to the secreted. Its function is as follows. Induces sprouting in endothelial cells through an autocrine and paracrine action. This chain is Angiopoietin-related protein 2 (Angptl2), found in Mus musculus (Mouse).